Consider the following 289-residue polypeptide: 4-diphosphocytidyl-2-C-methyl-D-erythritol kinase (289 aa).

Residue K11 is part of the active site. 96 to 106 (PVAAGIGGGSS) is an ATP binding site. The active site involves D138.

The protein belongs to the GHMP kinase family. IspE subfamily.

The catalysed reaction is 4-CDP-2-C-methyl-D-erythritol + ATP = 4-CDP-2-C-methyl-D-erythritol 2-phosphate + ADP + H(+). It participates in isoprenoid biosynthesis; isopentenyl diphosphate biosynthesis via DXP pathway; isopentenyl diphosphate from 1-deoxy-D-xylulose 5-phosphate: step 3/6. In terms of biological role, catalyzes the phosphorylation of the position 2 hydroxy group of 4-diphosphocytidyl-2C-methyl-D-erythritol. The sequence is that of 4-diphosphocytidyl-2-C-methyl-D-erythritol kinase from Azorhizobium caulinodans (strain ATCC 43989 / DSM 5975 / JCM 20966 / LMG 6465 / NBRC 14845 / NCIMB 13405 / ORS 571).